Here is a 390-residue protein sequence, read N- to C-terminus: Formamidopyrimidine-DNA glycosylase (390 aa).

Pro2 (schiff-base intermediate with DNA) is an active-site residue. Residue Glu3 is the Proton donor of the active site. Lys60 serves as the catalytic Proton donor; for beta-elimination activity. DNA-binding residues include Tyr107, Arg126, Lys167, and Asn186. Residues 283 to 390 (AEKAAKVRPA…AGKKPKGRKS (108 aa)) form a disordered region. Residues 301–316 (DDGDGEEDEQETEKED) show a composition bias toward acidic residues. The segment covering 321–337 (SKKGQKPRGGRGKKPAS) has biased composition (basic residues). Positions 343 to 355 (ESDDDGDDSEAEE) are enriched in acidic residues. The span at 360–370 (PKGRGTKPAIK) shows a compositional bias: basic residues.

Belongs to the FPG family. As to quaternary structure, monomer. As to expression, expressed in leaves (at protein levels).

It is found in the nucleus. The enzyme catalyses Hydrolysis of DNA containing ring-opened 7-methylguanine residues, releasing 2,6-diamino-4-hydroxy-5-(N-methyl)formamidopyrimidine.. It carries out the reaction 2'-deoxyribonucleotide-(2'-deoxyribose 5'-phosphate)-2'-deoxyribonucleotide-DNA = a 3'-end 2'-deoxyribonucleotide-(2,3-dehydro-2,3-deoxyribose 5'-phosphate)-DNA + a 5'-end 5'-phospho-2'-deoxyribonucleoside-DNA + H(+). In terms of biological role, involved in base excision repair of DNA damaged by oxidation or by mutagenic agents. Acts as a DNA glycosylase that recognizes and removes damaged bases. Can process efficiently 4,6-diamino-5-formamidopyrimidine (FapyA), 2,6-diamino-4- hydroxy-5-formamidopyrimidine (FapyG) and the further oxidation products of 8-oxoguanine (8-oxoG), such as guanidinohydantoin and spiroiminodihydantoin. Has marginal activity towards 8-oxoG. Has AP (apurinic/apyrimidinic) lyase activity. Cleaves the DNA backbone by beta-delta elimination to generate a single-strand break at the site of the removed base with both 3'- and 5'-phosphates. In Arabidopsis thaliana (Mouse-ear cress), this protein is Formamidopyrimidine-DNA glycosylase (FPG1).